We begin with the raw amino-acid sequence, 536 residues long: CTP synthase (536 aa).

The segment at 1 to 267 (MTKFIFVTGG…DDIVIKRLQL (267 aa)) is amidoligase domain. CTP is bound at residue serine 13. Serine 13 provides a ligand contact to UTP. 14-19 (SLGKGI) provides a ligand contact to ATP. Residue tyrosine 54 coordinates L-glutamine. ATP is bound at residue aspartate 71. The Mg(2+) site is built by aspartate 71 and glutamate 141. CTP is bound by residues 148–150 (DIE), 188–193 (KTKPTQ), and lysine 224. UTP is bound by residues 188-193 (KTKPTQ) and lysine 224. 240-242 (RDA) serves as a coordination point for ATP. Positions 293–535 (TIGLVGKYVS…IEASLKYQQN (243 aa)) constitute a Glutamine amidotransferase type-1 domain. Residue glycine 355 participates in L-glutamine binding. Cysteine 382 functions as the Nucleophile; for glutamine hydrolysis in the catalytic mechanism. L-glutamine is bound by residues 383–386 (LGMQ), glutamate 406, and arginine 463. Catalysis depends on residues histidine 508 and glutamate 510.

Belongs to the CTP synthase family. In terms of assembly, homotetramer.

The enzyme catalyses UTP + L-glutamine + ATP + H2O = CTP + L-glutamate + ADP + phosphate + 2 H(+). It carries out the reaction L-glutamine + H2O = L-glutamate + NH4(+). The catalysed reaction is UTP + NH4(+) + ATP = CTP + ADP + phosphate + 2 H(+). It participates in pyrimidine metabolism; CTP biosynthesis via de novo pathway; CTP from UDP: step 2/2. Its activity is regulated as follows. Allosterically activated by GTP, when glutamine is the substrate; GTP has no effect on the reaction when ammonia is the substrate. The allosteric effector GTP functions by stabilizing the protein conformation that binds the tetrahedral intermediate(s) formed during glutamine hydrolysis. Inhibited by the product CTP, via allosteric rather than competitive inhibition. In terms of biological role, catalyzes the ATP-dependent amination of UTP to CTP with either L-glutamine or ammonia as the source of nitrogen. Regulates intracellular CTP levels through interactions with the four ribonucleotide triphosphates. The chain is CTP synthase from Staphylococcus aureus (strain COL).